Reading from the N-terminus, the 407-residue chain is Tryptophan 2,3-dioxygenase B (407 aa).

Residues 71-75 (FIVTH) and Arg143 each bind substrate. His327 contributes to the heme binding site. Thr341 contacts substrate.

Belongs to the tryptophan 2,3-dioxygenase family. Homotetramer. Dimer of dimers. Requires heme as cofactor.

The enzyme catalyses L-tryptophan + O2 = N-formyl-L-kynurenine. It participates in amino-acid degradation; L-tryptophan degradation via kynurenine pathway; L-kynurenine from L-tryptophan: step 1/2. Its function is as follows. Heme-dependent dioxygenase that catalyzes the oxidative cleavage of the L-tryptophan (L-Trp) pyrrole ring and converts L-tryptophan to N-formyl-L-kynurenine. Catalyzes the oxidative cleavage of the indole moiety. The chain is Tryptophan 2,3-dioxygenase B from Danio rerio (Zebrafish).